We begin with the raw amino-acid sequence, 96 residues long: Aspartyl/glutamyl-tRNA(Asn/Gln) amidotransferase subunit C (96 aa).

It belongs to the GatC family. In terms of assembly, heterotrimer of A, B and C subunits.

It catalyses the reaction L-glutamyl-tRNA(Gln) + L-glutamine + ATP + H2O = L-glutaminyl-tRNA(Gln) + L-glutamate + ADP + phosphate + H(+). The catalysed reaction is L-aspartyl-tRNA(Asn) + L-glutamine + ATP + H2O = L-asparaginyl-tRNA(Asn) + L-glutamate + ADP + phosphate + 2 H(+). In terms of biological role, allows the formation of correctly charged Asn-tRNA(Asn) or Gln-tRNA(Gln) through the transamidation of misacylated Asp-tRNA(Asn) or Glu-tRNA(Gln) in organisms which lack either or both of asparaginyl-tRNA or glutaminyl-tRNA synthetases. The reaction takes place in the presence of glutamine and ATP through an activated phospho-Asp-tRNA(Asn) or phospho-Glu-tRNA(Gln). This is Aspartyl/glutamyl-tRNA(Asn/Gln) amidotransferase subunit C from Bacillus anthracis (strain A0248).